A 394-amino-acid chain; its full sequence is ATP phosphoribosyltransferase regulatory subunit (394 aa).

The protein belongs to the class-II aminoacyl-tRNA synthetase family. HisZ subfamily. Heteromultimer composed of HisG and HisZ subunits.

The protein localises to the cytoplasm. Its pathway is amino-acid biosynthesis; L-histidine biosynthesis; L-histidine from 5-phospho-alpha-D-ribose 1-diphosphate: step 1/9. Its function is as follows. Required for the first step of histidine biosynthesis. May allow the feedback regulation of ATP phosphoribosyltransferase activity by histidine. The sequence is that of ATP phosphoribosyltransferase regulatory subunit from Geobacillus kaustophilus (strain HTA426).